The sequence spans 242 residues: Pyridoxine 5'-phosphate synthase (242 aa).

Asn-7 is a 3-amino-2-oxopropyl phosphate binding site. 9 to 10 (DH) lines the 1-deoxy-D-xylulose 5-phosphate pocket. Arg-18 contacts 3-amino-2-oxopropyl phosphate. The active-site Proton acceptor is His-43. 1-deoxy-D-xylulose 5-phosphate-binding residues include Arg-45 and His-50. The active-site Proton acceptor is Glu-70. A 1-deoxy-D-xylulose 5-phosphate-binding site is contributed by Thr-100. The active-site Proton donor is His-191. Residues Gly-192 and 213 to 214 (GH) contribute to the 3-amino-2-oxopropyl phosphate site.

It belongs to the PNP synthase family. As to quaternary structure, homooctamer; tetramer of dimers.

Its subcellular location is the cytoplasm. The catalysed reaction is 3-amino-2-oxopropyl phosphate + 1-deoxy-D-xylulose 5-phosphate = pyridoxine 5'-phosphate + phosphate + 2 H2O + H(+). It participates in cofactor biosynthesis; pyridoxine 5'-phosphate biosynthesis; pyridoxine 5'-phosphate from D-erythrose 4-phosphate: step 5/5. In terms of biological role, catalyzes the complicated ring closure reaction between the two acyclic compounds 1-deoxy-D-xylulose-5-phosphate (DXP) and 3-amino-2-oxopropyl phosphate (1-amino-acetone-3-phosphate or AAP) to form pyridoxine 5'-phosphate (PNP) and inorganic phosphate. The chain is Pyridoxine 5'-phosphate synthase from Chromobacterium violaceum (strain ATCC 12472 / DSM 30191 / JCM 1249 / CCUG 213 / NBRC 12614 / NCIMB 9131 / NCTC 9757 / MK).